Here is a 249-residue protein sequence, read N- to C-terminus: Segregation and condensation protein A (249 aa).

It belongs to the ScpA family. As to quaternary structure, component of a cohesin-like complex composed of ScpA, ScpB and the Smc homodimer, in which ScpA and ScpB bind to the head domain of Smc. The presence of the three proteins is required for the association of the complex with DNA.

Its subcellular location is the cytoplasm. Participates in chromosomal partition during cell division. May act via the formation of a condensin-like complex containing Smc and ScpB that pull DNA away from mid-cell into both cell halves. The sequence is that of Segregation and condensation protein A from Listeria innocua serovar 6a (strain ATCC BAA-680 / CLIP 11262).